The chain runs to 64 residues: Large ribosomal subunit protein bL35 (64 aa).

The protein belongs to the bacterial ribosomal protein bL35 family.

The sequence is that of Large ribosomal subunit protein bL35 from Clavibacter michiganensis subsp. michiganensis (strain NCPPB 382).